The following is a 317-amino-acid chain: Taste receptor type 2 member 7 (317 aa).

The Extracellular portion of the chain corresponds to 1-9 (MTDKVQTTL). A helical transmembrane segment spans residues 10 to 30 (LFLAIGEFSVGILGNAFIGLV). Topologically, residues 31–55 (NCMDWVKKRKIASIDLILTSLAISR) are cytoplasmic. The helical transmembrane segment at 56–76 (ICLLCVILLDCFMLVLYPDVY) threads the bilayer. Residues 77-94 (ATGKQMRIIDFFWTLTNH) are Extracellular-facing. Residues 95 to 115 (LSIWFATCLSIYYFFKIANFF) traverse the membrane as a helical segment. Residues 116–128 (HPLFLWMKWRIDR) are Cytoplasmic-facing. A helical membrane pass occupies residues 129–149 (VISWILLGCMVLSVFINLPAT). The Extracellular portion of the chain corresponds to 150–187 (ENLNADFRRCVKAKRKTNLTWSCRVTKAQHASTKLFLN). Asn-167 carries N-linked (GlcNAc...) asparagine glycosylation. The helical transmembrane segment at 188 to 208 (LVTLLPFSVCLVSFFLLILSL) threads the bilayer. At 209 to 235 (WRHIRRMQLSATGCRDPSTEAHVRALK) the chain is on the cytoplasmic side. A helical membrane pass occupies residues 236–256 (AVISFLFLFIAYYLSFLIATS). Residues 257-266 (SYFIPETELA) lie on the Extracellular side of the membrane. A helical membrane pass occupies residues 267–287 (VIFGEFIALIYPSSHSFILIL). The Cytoplasmic segment spans residues 288 to 317 (GNNKLRRASLKVLWTVMSILKGRKFQQKQI).

This sequence belongs to the G-protein coupled receptor T2R family.

The protein localises to the membrane. In terms of biological role, gustducin-coupled receptor implicated in the perception of bitter compounds in the oral cavity and the gastrointestinal tract. Signals through PLCB2 and the calcium-regulated cation channel TRPM5. This is Taste receptor type 2 member 7 (TAS2R7) from Papio hamadryas (Hamadryas baboon).